Reading from the N-terminus, the 161-residue chain is uncharacterized protein (161 aa).

In terms of assembly, interacts with ribosomes.

This is an uncharacterized protein from Saccharomyces cerevisiae (strain ATCC 204508 / S288c) (Baker's yeast).